The chain runs to 387 residues: Putative glutamate--cysteine ligase 2 (387 aa).

This sequence belongs to the glutamate--cysteine ligase type 2 family. YbdK subfamily.

It catalyses the reaction L-cysteine + L-glutamate + ATP = gamma-L-glutamyl-L-cysteine + ADP + phosphate + H(+). Its function is as follows. ATP-dependent carboxylate-amine ligase which exhibits weak glutamate--cysteine ligase activity. The polypeptide is Putative glutamate--cysteine ligase 2 (Pseudomonas fluorescens (strain ATCC BAA-477 / NRRL B-23932 / Pf-5)).